The primary structure comprises 568 residues: Peptidoglycan D,D-transpeptidase FtsI (568 aa).

The helical transmembrane segment at 19-39 (FVTLCSIVFLFLVILTLRIIF) threads the bilayer. Serine 302 functions as the Acyl-ester intermediate in the catalytic mechanism.

This sequence belongs to the transpeptidase family. FtsI subfamily.

The protein localises to the cell inner membrane. The enzyme catalyses Preferential cleavage: (Ac)2-L-Lys-D-Ala-|-D-Ala. Also transpeptidation of peptidyl-alanyl moieties that are N-acyl substituents of D-alanine.. It functions in the pathway cell wall biogenesis; peptidoglycan biosynthesis. In terms of biological role, catalyzes cross-linking of the peptidoglycan cell wall at the division septum. This Buchnera aphidicola subsp. Schizaphis graminum (strain Sg) protein is Peptidoglycan D,D-transpeptidase FtsI.